The chain runs to 143 residues: MRRVYTNRRAHHEYELLERFEAGIALTGSEVKSVRAGGVDFRDAFARLNNGNVELEGLYIPTYTEATYNNHEPRRTRRLLLHREEIGKLKRALEQKGLTLVPTRLYQKGRVFKVELALARGKKLHDKRRAEAEKTLRRELREL.

This sequence belongs to the SmpB family.

It is found in the cytoplasm. In terms of biological role, required for rescue of stalled ribosomes mediated by trans-translation. Binds to transfer-messenger RNA (tmRNA), required for stable association of tmRNA with ribosomes. tmRNA and SmpB together mimic tRNA shape, replacing the anticodon stem-loop with SmpB. tmRNA is encoded by the ssrA gene; the 2 termini fold to resemble tRNA(Ala) and it encodes a 'tag peptide', a short internal open reading frame. During trans-translation Ala-aminoacylated tmRNA acts like a tRNA, entering the A-site of stalled ribosomes, displacing the stalled mRNA. The ribosome then switches to translate the ORF on the tmRNA; the nascent peptide is terminated with the 'tag peptide' encoded by the tmRNA and targeted for degradation. The ribosome is freed to recommence translation, which seems to be the essential function of trans-translation. This Deinococcus geothermalis (strain DSM 11300 / CIP 105573 / AG-3a) protein is SsrA-binding protein.